Consider the following 78-residue polypeptide: UPF0369 protein RF_1112 (78 aa).

The protein belongs to the SDHAF4 family.

The sequence is that of UPF0369 protein RF_1112 from Rickettsia felis (strain ATCC VR-1525 / URRWXCal2) (Rickettsia azadi).